A 349-amino-acid chain; its full sequence is Phosphoribosylformylglycinamidine cyclo-ligase (349 aa).

This sequence belongs to the AIR synthase family.

Its subcellular location is the cytoplasm. The catalysed reaction is 2-formamido-N(1)-(5-O-phospho-beta-D-ribosyl)acetamidine + ATP = 5-amino-1-(5-phospho-beta-D-ribosyl)imidazole + ADP + phosphate + H(+). It participates in purine metabolism; IMP biosynthesis via de novo pathway; 5-amino-1-(5-phospho-D-ribosyl)imidazole from N(2)-formyl-N(1)-(5-phospho-D-ribosyl)glycinamide: step 2/2. The chain is Phosphoribosylformylglycinamidine cyclo-ligase from Lactobacillus delbrueckii subsp. bulgaricus (strain ATCC BAA-365 / Lb-18).